Consider the following 316-residue polypeptide: tRNA dimethylallyltransferase (316 aa).

17–24 (GPTASGKT) serves as a coordination point for ATP. 19-24 (TASGKT) provides a ligand contact to substrate. Interaction with substrate tRNA stretches follow at residues 42 to 45 (DSAL), 166 to 170 (QRLSR), and 247 to 252 (RCVGYR).

The protein belongs to the IPP transferase family. Monomer. Mg(2+) serves as cofactor.

It carries out the reaction adenosine(37) in tRNA + dimethylallyl diphosphate = N(6)-dimethylallyladenosine(37) in tRNA + diphosphate. Functionally, catalyzes the transfer of a dimethylallyl group onto the adenine at position 37 in tRNAs that read codons beginning with uridine, leading to the formation of N6-(dimethylallyl)adenosine (i(6)A). This chain is tRNA dimethylallyltransferase, found in Erwinia tasmaniensis (strain DSM 17950 / CFBP 7177 / CIP 109463 / NCPPB 4357 / Et1/99).